Consider the following 650-residue polypeptide: Zinc finger CCCH domain-containing protein 55 (650 aa).

The tract at residues 67–162 is disordered; it reads NSPSSTPTSP…THSGSADAAG (96 aa). Over residues 105–128 the composition is skewed to low complexity; that stretch reads SPSSPSSTSPWSFNNCINGNNGNN. The span at 141–154 shows a compositional bias: polar residues; the sequence is PFSSHQSNGLSATH. The segment at 232–254 adopts a C3H1-type zinc-finger fold; it reads PCVYFSRGLCKNGESCKFIHGGY. The RRM domain maps to 357–433; that stretch reads RQIYLTFPAD…RVLVKPYKEK (77 aa). The segment at 566–650 is disordered; the sequence is PVVNPMSVNN…PPVTTNNLMQ (85 aa). The segment covering 581–590 has biased composition (basic and acidic residues); that stretch reads AKEETNKSEL.

The protein is Zinc finger CCCH domain-containing protein 55 of Arabidopsis thaliana (Mouse-ear cress).